The chain runs to 366 residues: MIEYETKVKIDELKENFEDLKDVFNIDKVEEEVKKLDKEMMEPNFWNDQNRAKKISKMAQNLKDEIDEFKKLENDFEELEIAVELSEDDPSMTAQVEAILKVIEKKIGSFRLRMLLSEEYDDANAFLSLHPGAGGTESQDWASMLLRMYTRWADKNNYDIETIDFQEGDEAGIKSATIKISGPYAYGKLKYESGVHRLVRISPFDANGRRHTSFASISVMPEFDENVEIEINPDDLKIDTYRSGGAGGQHVNKTDSAVRITHLPTGIVVAVQNERSQHQNKATALKILKAKLYELEHQKKLEEKLRLRGEVKDISWGNQIRSYVLYPYTLVKDLRTEYETSNAQAVLDGEIDEFIEEELLFFAKYK.

At Q249 the chain carries N5-methylglutamine.

Belongs to the prokaryotic/mitochondrial release factor family. In terms of processing, methylated by PrmC. Methylation increases the termination efficiency of RF2.

It is found in the cytoplasm. In terms of biological role, peptide chain release factor 2 directs the termination of translation in response to the peptide chain termination codons UGA and UAA. The sequence is that of Peptide chain release factor 2 from Petrotoga mobilis (strain DSM 10674 / SJ95).